Consider the following 177-residue polypeptide: MSRVAKAPVVVPAGVDVKINGQVITIKGKNGELTRTLNDAVEVKHADNTLTFGPRDGYADGWAQAGTARALLNSMVIGVTEGFTKKLQLVGVGYRAAVKGNVINLSLGFSHPVDHQLPAGITAECPTQTEIVLKGVDKQVIGQVAADLRAYRRPEPYKGKGVRYADEVVRTKEAKKK.

Position 44 is an N6-acetyllysine (Lys-44).

Belongs to the universal ribosomal protein uL6 family. In terms of assembly, part of the 50S ribosomal subunit.

Its function is as follows. This protein binds to the 23S rRNA, and is important in its secondary structure. It is located near the subunit interface in the base of the L7/L12 stalk, and near the tRNA binding site of the peptidyltransferase center. This is Large ribosomal subunit protein uL6 from Shigella sonnei (strain Ss046).